A 411-amino-acid chain; its full sequence is Heparan-sulfate 6-O-sulfotransferase 1 (411 aa).

Residues Met1–Val19 are Cytoplasmic-facing. Residues Leu20–Gly37 form a helical; Signal-anchor for type II membrane protein membrane-spanning segment. Residues Pro38 to Trp411 are Lumenal-facing. His93–Thr101 contributes to the 3'-phosphoadenylyl sulfate binding site. Substrate is bound by residues Lys123–Lys124, Arg140, Trp145, and His150. The active-site Proton acceptor is the His150. The 3'-phosphoadenylyl sulfate site is built by Arg185 and Ser193. Substrate-binding residues include His197 and Trp204. N-linked (GlcNAc...) asparagine glycosylation occurs at Asn264. Met317–Tyr319 is a 3'-phosphoadenylyl sulfate binding site. An N-linked (GlcNAc...) asparagine glycan is attached at Asn320. Arg323–Ala324 provides a ligand contact to 3'-phosphoadenylyl sulfate. Residues Lys352–Ala386 are a coiled coil. Positions Leu380–Glu401 are disordered.

It belongs to the sulfotransferase 6 family. Post-translationally, N-glycosylated. In terms of tissue distribution, expressed in fetal brain and liver.

The protein localises to the membrane. It carries out the reaction alpha-D-glucosaminyl-[heparan sulfate](n) + 3'-phosphoadenylyl sulfate = 6-sulfo-alpha-D-glucosaminyl-[heparan sulfate](n) + adenosine 3',5'-bisphosphate + H(+). 6-O-sulfation enzyme which catalyzes the transfer of sulfate from 3'-phosphoadenosine 5'-phosphosulfate (PAPS) to position 6 of the N-sulfoglucosamine residue (GlcNS) of heparan sulfate. Critical for normal neuronal development where it may play a role in neuron branching. May also play a role in limb development. May prefer iduronic acid. This Mus musculus (Mouse) protein is Heparan-sulfate 6-O-sulfotransferase 1.